The primary structure comprises 161 residues: Crossover junction endodeoxyribonuclease RuvC (161 aa).

Catalysis depends on residues D9, E69, and H144. Mg(2+) is bound by residues D9, E69, and H144.

This sequence belongs to the RuvC family. Homodimer which binds Holliday junction (HJ) DNA. The HJ becomes 2-fold symmetrical on binding to RuvC with unstacked arms; it has a different conformation from HJ DNA in complex with RuvA. In the full resolvosome a probable DNA-RuvA(4)-RuvB(12)-RuvC(2) complex forms which resolves the HJ. Requires Mg(2+) as cofactor.

It is found in the cytoplasm. The catalysed reaction is Endonucleolytic cleavage at a junction such as a reciprocal single-stranded crossover between two homologous DNA duplexes (Holliday junction).. Functionally, the RuvA-RuvB-RuvC complex processes Holliday junction (HJ) DNA during genetic recombination and DNA repair. Endonuclease that resolves HJ intermediates. Cleaves cruciform DNA by making single-stranded nicks across the HJ at symmetrical positions within the homologous arms, yielding a 5'-phosphate and a 3'-hydroxyl group; requires a central core of homology in the junction. The consensus cleavage sequence is 5'-(A/T)TT(C/G)-3'. Cleavage occurs on the 3'-side of the TT dinucleotide at the point of strand exchange. HJ branch migration catalyzed by RuvA-RuvB allows RuvC to scan DNA until it finds its consensus sequence, where it cleaves and resolves the cruciform DNA. The polypeptide is Crossover junction endodeoxyribonuclease RuvC (Borrelia turicatae (strain 91E135)).